The following is a 155-amino-acid chain: Altered inheritance rate of mitochondria protein 29 (155 aa).

Serine 78 is subject to Phosphoserine.

The protein belongs to the UPF0538 family.

Its subcellular location is the cytoplasm. In terms of biological role, may be involved in mitochondrial organization and biogenesis. The sequence is that of Altered inheritance rate of mitochondria protein 29 (AIM29) from Saccharomyces cerevisiae (strain ATCC 204508 / S288c) (Baker's yeast).